A 225-amino-acid chain; its full sequence is Uridylate kinase (225 aa).

Residue 9 to 10 (GS) participates in ATP binding. A UMP-binding site is contributed by G44. ATP-binding residues include G45 and R49. UMP is bound by residues D66 and 114–120 (THPGHTT). Residues T140, N141, Y146, and D149 each contribute to the ATP site.

This sequence belongs to the UMP kinase family. In terms of assembly, homohexamer.

It localises to the cytoplasm. It carries out the reaction UMP + ATP = UDP + ADP. It functions in the pathway pyrimidine metabolism; CTP biosynthesis via de novo pathway; UDP from UMP (UMPK route): step 1/1. Inhibited by UTP. Catalyzes the reversible phosphorylation of UMP to UDP. The polypeptide is Uridylate kinase (Thermococcus onnurineus (strain NA1)).